A 450-amino-acid polypeptide reads, in one-letter code: D-inositol 3-phosphate glycosyltransferase (450 aa).

Histidine 21 contributes to the 1D-myo-inositol 3-phosphate binding site. UDP-N-acetyl-alpha-D-glucosamine-binding positions include 27–28 (QP) and glycine 35. Residues 32-37 (DAGGMN), lysine 90, tyrosine 123, threonine 147, and arginine 167 contribute to the 1D-myo-inositol 3-phosphate site. Arginine 241, lysine 246, and valine 307 together coordinate UDP-N-acetyl-alpha-D-glucosamine. The Mg(2+) site is built by tyrosine 316, arginine 317, and alanine 319. Residues glutamate 329 and glutamate 337 each coordinate UDP-N-acetyl-alpha-D-glucosamine. A Mg(2+)-binding site is contributed by threonine 343.

Belongs to the glycosyltransferase group 1 family. MshA subfamily. In terms of assembly, homodimer.

The catalysed reaction is 1D-myo-inositol 3-phosphate + UDP-N-acetyl-alpha-D-glucosamine = 1D-myo-inositol 2-acetamido-2-deoxy-alpha-D-glucopyranoside 3-phosphate + UDP + H(+). Catalyzes the transfer of a N-acetyl-glucosamine moiety to 1D-myo-inositol 3-phosphate to produce 1D-myo-inositol 2-acetamido-2-deoxy-glucopyranoside 3-phosphate in the mycothiol biosynthesis pathway. The chain is D-inositol 3-phosphate glycosyltransferase from Geodermatophilus obscurus (strain ATCC 25078 / DSM 43160 / JCM 3152 / CCUG 61914 / KCC A-0152 / KCTC 9177 / NBRC 13315 / NRRL B-3577 / G-20).